Reading from the N-terminus, the 174-residue chain is Adenylosuccinate synthetase (174 aa).

Residues 13 to 19 (GDEGKGK) and 41 to 43 (GHT) contribute to the GTP site. Asp14 functions as the Proton acceptor in the catalytic mechanism. The Mg(2+) site is built by Asp14 and Gly41. Residues 14–17 (DEGK), 39–42 (NAGH), Thr130, and Arg144 each bind IMP. The active-site Proton donor is His42.

The protein belongs to the adenylosuccinate synthetase family. Homodimer. Mg(2+) is required as a cofactor.

It localises to the cytoplasm. It carries out the reaction IMP + L-aspartate + GTP = N(6)-(1,2-dicarboxyethyl)-AMP + GDP + phosphate + 2 H(+). The protein operates within purine metabolism; AMP biosynthesis via de novo pathway; AMP from IMP: step 1/2. Its function is as follows. Plays an important role in the de novo pathway of purine nucleotide biosynthesis. Catalyzes the first committed step in the biosynthesis of AMP from IMP. This is Adenylosuccinate synthetase from Stutzerimonas stutzeri (Pseudomonas stutzeri).